Reading from the N-terminus, the 63-residue chain is Large ribosomal subunit protein uL29 (63 aa).

Belongs to the universal ribosomal protein uL29 family.

The polypeptide is Large ribosomal subunit protein uL29 (Pseudoalteromonas atlantica (strain T6c / ATCC BAA-1087)).